Reading from the N-terminus, the 218-residue chain is Embryonic polyadenylate-binding protein 2-A (218 aa).

The segment covering 1–16 (MSERVSEEPGLDKGDG) has biased composition (basic and acidic residues). Disordered regions lie at residues 1-26 (MSERVSEEPGLDKGDGAEECELDDPE) and 169-218 (RTNM…NHPY). Residues 93 to 170 (RSVYVGNVDY…RTIKVLPKRT (78 aa)) form the RRM domain. Over residues 205 to 218 (FRGCGRPGPLNHPY) the composition is skewed to low complexity.

The protein localises to the cytoplasm. Functionally, binds the poly(A) tail of mRNA. Unable to interact with the cap-binding complex and is therefore unlikely to be involved in translation initiation. In Xenopus laevis (African clawed frog), this protein is Embryonic polyadenylate-binding protein 2-A (Pabpn1l-a).